A 721-amino-acid chain; its full sequence is Vacuolar transporter chaperone complex subunit 4 (721 aa).

Residues 1–148 (MKFGEHLSKS…GFILKPVFQV (148 aa)) form the SPX domain. Topologically, residues 1–630 (MKFGEHLSKS…PKVYFATERT (630 aa)) are cytoplasmic. K75 participates in a covalent cross-link: Glycyl lysine isopeptide (Lys-Gly) (interchain with G-Cter in ubiquitin). Residues 126 to 133 (GFQKIIKK) form an important for inositol polyphosphate binding region. K200, R264, R266, K281, K294, Y359, and R361 together coordinate ATP. A Mn(2+)-binding site is contributed by E426. K458 is an active-site residue. Positions 489 to 512 (PLPTNIEITRPGRSDNEDNDFDED) are disordered. 2 helical membrane-spanning segments follow: residues 631–651 (YLSW…LLTY) and 652–672 (GSPT…AVLI). Over 673–699 (RTVMVYAKRVVNIRLKRAVDYEDKIGP) the chain is Cytoplasmic. A helical membrane pass occupies residues 700–720 (GMVSVFLILSILFSFFCNLVA). Residue K721 is a topological domain, vacuolar.

The protein belongs to the VTC4 family. The VTC core complex is an integral membrane heterooligomer composed of the catalytic subunit VTC4 and the accessory subunits VTC1, VTC2 and VTC3. The complex exists in 2 different sub-complexes: VTC1-VTC2-VCT4 and VCT1-VTC3-VTC4. The VCT1-VTC3-VTC4 subcomplex is mostly found on the vacuolar membrane. The VTC1-VTC2-VCT4 subcomplex is observed in the cell periphery, probably ER and nuclear envelope, but localizes to the vacuole under phosphate starvation. Each subunit contains 3 transmembrane helices. VTC1 is a small membrane protein without hydrophilic domain. VTC2, VTC3 and VTC4 are related and have 2 hydrophilic domains that face the cytosol, an N-terminal SPX domain and the central core domain. The central core in VTC4 is the catalytic domain, with the essential catalytic lysine replaced by isoleucine and leucine in VTC2 and VTC3, respectively. The core complex associates with the accessory subunit VTC5. The complex interacts with the v-SNARE NYV1 and with the V(0) subunit of V-ATPase VPH1. Mn(2+) is required as a cofactor.

Its subcellular location is the vacuole membrane. The protein localises to the cytoplasm. It localises to the cell cortex. It is found in the endoplasmic reticulum membrane. The protein resides in the cytoplasmic vesicle. Its subcellular location is the autophagosome membrane. The enzyme catalyses [phosphate](n) + ATP = [phosphate](n+1) + ADP. With respect to regulation, activity of the enzyme is Mn(2+)-dependent and enhanced in the presence of pyrophosphate (PPi). Catalytic subunit of the vacuolar transporter chaperone (VTC) complex. The VTC complex acts as a vacuolar polyphosphate polymerase that catalyzes the synthesis of inorganic polyphosphate (polyP) via transfer of phosphate from ATP to a growing polyP chain, releasing ADP. VTC exposes its catalytic domain VTC4 to the cytosol, where the growing polyP chain winds through a tunnel-shaped pocket, integrating cytoplasmic polymer synthesis with polyP membrane translocation. The VTC complex carries 9 vacuolar transmembrane domains, which are likely to constitute the translocation channel into the organelle lumen. PolyP synthesis is tightly coupled to its transport into the vacuole lumen, in order to avoid otherwise toxic intermediates in the cytosol, and it depends on the proton gradient across the membrane, formed by V-ATPase. The VTC complex also plays a role in vacuolar membrane fusion. Required for SEC18/NSF activity in SNARE priming, membrane binding of LMA1 and V(0) trans-complex formation. Binds inositol hexakisphosphate (Ins6P) and similar inositol polyphosphates, such as 5-diphospho-inositol pentakisphosphate (5-InsP7); these are important intracellular signaling molecules. Inositol polyphosphate binding promotes vacuolar polyphosphate synthesis. The VTC complex is required for microautophagy. It is a constituent of autophagic tubes and is required for scission of microautophagic vesicles from these tubes. The protein is Vacuolar transporter chaperone complex subunit 4 of Saccharomyces cerevisiae (strain ATCC 204508 / S288c) (Baker's yeast).